Reading from the N-terminus, the 239-residue chain is tRNA (guanine-N(7)-)-methyltransferase (239 aa).

4 residues coordinate S-adenosyl-L-methionine: E68, E93, D120, and D143. Residue D143 is part of the active site. Residues K147, D180, and 217–220 each bind substrate; that span reads TKFE.

It belongs to the class I-like SAM-binding methyltransferase superfamily. TrmB family.

The catalysed reaction is guanosine(46) in tRNA + S-adenosyl-L-methionine = N(7)-methylguanosine(46) in tRNA + S-adenosyl-L-homocysteine. It functions in the pathway tRNA modification; N(7)-methylguanine-tRNA biosynthesis. Catalyzes the formation of N(7)-methylguanine at position 46 (m7G46) in tRNA. The chain is tRNA (guanine-N(7)-)-methyltransferase from Vibrio cholerae serotype O1 (strain ATCC 39315 / El Tor Inaba N16961).